We begin with the raw amino-acid sequence, 427 residues long: Glucose-6-phosphate isomerase (427 aa).

Glutamate 277 acts as the Proton donor in catalysis. Residues histidine 298 and lysine 414 contribute to the active site.

The protein belongs to the GPI family.

Its subcellular location is the cytoplasm. The enzyme catalyses alpha-D-glucose 6-phosphate = beta-D-fructose 6-phosphate. It participates in carbohydrate biosynthesis; gluconeogenesis. The protein operates within carbohydrate degradation; glycolysis; D-glyceraldehyde 3-phosphate and glycerone phosphate from D-glucose: step 2/4. Its function is as follows. Catalyzes the reversible isomerization of glucose-6-phosphate to fructose-6-phosphate. This chain is Glucose-6-phosphate isomerase, found in Mycoplasma mycoides subsp. mycoides SC (strain CCUG 32753 / NCTC 10114 / PG1).